Consider the following 751-residue polypeptide: Fusarisetin A cluster transcription factor fsa6 (751 aa).

The disordered stretch occupies residues 1–35 (MADQAQDVRPTEWGPGKTPQGRARLPSSRPREKPQ). The zn(2)-C6 fungal-type DNA-binding region spans 38-66 (CNLCRRRKLRCDRQRPCSSCAQRELGLSC). The span at 107-116 (NVNAQDQVGA) shows a compositional bias: polar residues. Residues 107–153 (NVNAQDQVGATPSPRGQPRGPDYPTPAAVHAPSTNEEPVSAAVSPAD) form a disordered region.

The protein resides in the nucleus. In terms of biological role, transcription factor that regulates the expression of the gene cluster that mediates the biosynthesis of fusarisetin A. This is Fusarisetin A cluster transcription factor fsa6 from Fusarium sp. (strain FN080326).